A 338-amino-acid chain; its full sequence is Fructose-1,6-bisphosphatase class 1 1 (338 aa).

Mg(2+)-binding residues include E91, D113, L115, and D116. Residues 116 to 119, N208, and K274 each bind substrate; that span reads DGSS. E280 contributes to the Mg(2+) binding site.

The protein belongs to the FBPase class 1 family. In terms of assembly, homotetramer. Mg(2+) is required as a cofactor.

It is found in the cytoplasm. The enzyme catalyses beta-D-fructose 1,6-bisphosphate + H2O = beta-D-fructose 6-phosphate + phosphate. It participates in carbohydrate biosynthesis; gluconeogenesis. The sequence is that of Fructose-1,6-bisphosphatase class 1 1 from Cupriavidus taiwanensis (strain DSM 17343 / BCRC 17206 / CCUG 44338 / CIP 107171 / LMG 19424 / R1) (Ralstonia taiwanensis (strain LMG 19424)).